The following is a 309-amino-acid chain: DNA-directed RNA polymerase subunit alpha (309 aa).

Positions 1-225 (MFQVQCLESA…SLFKLVNSAD (225 aa)) are alpha N-terminal domain (alpha-NTD). The tract at residues 237–309 (IVQVSQTDVT…LHERFNLTLN (73 aa)) is alpha C-terminal domain (alpha-CTD).

The protein belongs to the RNA polymerase alpha chain family. As to quaternary structure, in plastids the minimal PEP RNA polymerase catalytic core is composed of four subunits: alpha, beta, beta', and beta''. When a (nuclear-encoded) sigma factor is associated with the core the holoenzyme is formed, which can initiate transcription.

The protein localises to the plastid. The protein resides in the chloroplast. It carries out the reaction RNA(n) + a ribonucleoside 5'-triphosphate = RNA(n+1) + diphosphate. Functionally, DNA-dependent RNA polymerase catalyzes the transcription of DNA into RNA using the four ribonucleoside triphosphates as substrates. This is DNA-directed RNA polymerase subunit alpha from Emiliania huxleyi (Coccolithophore).